The primary structure comprises 358 residues: UPF0575 protein C19orf67 (358 aa).

Positions 1 to 84 are disordered; the sequence is MATEQWFEGS…PGPAPPRLSL (84 aa). Pro residues-rich tracts occupy residues 17 to 32 and 70 to 80; these read ETPPPDALEPGTPPCG and PLVPRPGPAPP.

It belongs to the UPF0575 family.

The polypeptide is UPF0575 protein C19orf67 (C19orf67) (Homo sapiens (Human)).